A 245-amino-acid polypeptide reads, in one-letter code: 6-carboxyhexanoate--CoA ligase (245 aa).

Belongs to the BioW family. Homodimer. Requires Mg(2+) as cofactor.

It catalyses the reaction heptanedioate + ATP + CoA = 6-carboxyhexanoyl-CoA + AMP + diphosphate. The protein operates within metabolic intermediate metabolism; pimeloyl-CoA biosynthesis; pimeloyl-CoA from pimelate: step 1/1. Its function is as follows. Catalyzes the transformation of pimelate into pimeloyl-CoA with concomitant hydrolysis of ATP to AMP. This is 6-carboxyhexanoate--CoA ligase from Methanococcus vannielii (strain ATCC 35089 / DSM 1224 / JCM 13029 / OCM 148 / SB).